The primary structure comprises 1203 residues: DNA-directed RNA polymerase subunit beta (1203 aa).

A compositionally biased stretch (basic and acidic residues) spans 1174–1195 (AAQEAKAAFEAEEAEKATKAEA). Residues 1174 to 1203 (AAQEAKAAFEAEEAEKATKAEATEEAAEQE) are disordered.

It belongs to the RNA polymerase beta chain family. The RNAP catalytic core consists of 2 alpha, 1 beta, 1 beta' and 1 omega subunit. When a sigma factor is associated with the core the holoenzyme is formed, which can initiate transcription.

It catalyses the reaction RNA(n) + a ribonucleoside 5'-triphosphate = RNA(n+1) + diphosphate. Functionally, DNA-dependent RNA polymerase catalyzes the transcription of DNA into RNA using the four ribonucleoside triphosphates as substrates. The protein is DNA-directed RNA polymerase subunit beta of Streptococcus pneumoniae (strain P1031).